The following is a 213-amino-acid chain: GrpE protein homolog, mitochondrial (213 aa).

Positions 35 to 55 (STEKQPEEATEQKATESSPEV) are disordered. A compositionally biased stretch (basic and acidic residues) spans 38 to 55 (KQPEEATEQKATESSPEV).

This sequence belongs to the GrpE family. In terms of assembly, probable component of the PAM complex at least composed of a mitochondrial HSP70 protein, Roe1, TIM44, blp/TIM16 and TIM14.

Its subcellular location is the mitochondrion matrix. Functionally, essential component of the PAM complex, a complex required for the translocation of transit peptide-containing proteins from the inner membrane into the mitochondrial matrix in an ATP-dependent manner. Seems to control the nucleotide-dependent binding of mitochondrial HSP70 to substrate proteins. This chain is GrpE protein homolog, mitochondrial (Roe1), found in Drosophila melanogaster (Fruit fly).